The sequence spans 177 residues: Small ribosomal subunit protein uS5 (177 aa).

The S5 DRBM domain occupies 21 to 84; that stretch reads LLDRVVKIKR…KQASRSMIHV (64 aa).

The protein belongs to the universal ribosomal protein uS5 family. Part of the 30S ribosomal subunit. Contacts proteins S4 and S8.

With S4 and S12 plays an important role in translational accuracy. Its function is as follows. Located at the back of the 30S subunit body where it stabilizes the conformation of the head with respect to the body. This Rhodopirellula baltica (strain DSM 10527 / NCIMB 13988 / SH1) protein is Small ribosomal subunit protein uS5.